A 174-amino-acid chain; its full sequence is Crossover junction endodeoxyribonuclease RuvC (174 aa).

Active-site residues include Asp8, Glu67, and Asp139. The Mg(2+) site is built by Asp8, Glu67, and Asp139.

It belongs to the RuvC family. As to quaternary structure, homodimer which binds Holliday junction (HJ) DNA. The HJ becomes 2-fold symmetrical on binding to RuvC with unstacked arms; it has a different conformation from HJ DNA in complex with RuvA. In the full resolvosome a probable DNA-RuvA(4)-RuvB(12)-RuvC(2) complex forms which resolves the HJ. Mg(2+) serves as cofactor.

The protein localises to the cytoplasm. It carries out the reaction Endonucleolytic cleavage at a junction such as a reciprocal single-stranded crossover between two homologous DNA duplexes (Holliday junction).. Its function is as follows. The RuvA-RuvB-RuvC complex processes Holliday junction (HJ) DNA during genetic recombination and DNA repair. Endonuclease that resolves HJ intermediates. Cleaves cruciform DNA by making single-stranded nicks across the HJ at symmetrical positions within the homologous arms, yielding a 5'-phosphate and a 3'-hydroxyl group; requires a central core of homology in the junction. The consensus cleavage sequence is 5'-(A/T)TT(C/G)-3'. Cleavage occurs on the 3'-side of the TT dinucleotide at the point of strand exchange. HJ branch migration catalyzed by RuvA-RuvB allows RuvC to scan DNA until it finds its consensus sequence, where it cleaves and resolves the cruciform DNA. The polypeptide is Crossover junction endodeoxyribonuclease RuvC (Stutzerimonas stutzeri (strain A1501) (Pseudomonas stutzeri)).